We begin with the raw amino-acid sequence, 381 residues long: L-lactate dehydrogenase (381 aa).

Residues 1 to 380 (MIISSANDYR…TRDALVDLSK (380 aa)) enclose the FMN hydroxy acid dehydrogenase domain. Tyrosine 24 contacts substrate. The FMN site is built by serine 106 and glutamine 127. Tyrosine 129 lines the substrate pocket. Threonine 155 contacts FMN. Position 164 (arginine 164) interacts with substrate. Lysine 251 is a binding site for FMN. Catalysis depends on histidine 275, which acts as the Proton acceptor. Arginine 278 serves as a coordination point for substrate. 306 to 330 (DSGIRNGLDIVRMLALGADATMLGR) contributes to the FMN binding site.

It belongs to the FMN-dependent alpha-hydroxy acid dehydrogenase family. It depends on FMN as a cofactor.

The protein resides in the cell inner membrane. It catalyses the reaction (S)-lactate + A = pyruvate + AH2. Catalyzes the conversion of L-lactate to pyruvate. Is coupled to the respiratory chain. The polypeptide is L-lactate dehydrogenase (Actinobacillus pleuropneumoniae serotype 5b (strain L20)).